The chain runs to 529 residues: Bifunctional purine biosynthesis protein PurH (529 aa).

In terms of domain architecture, MGS-like spans 1-148 (MQQRRPVRRA…KNHKDVAIVV (148 aa)).

Belongs to the PurH family.

It catalyses the reaction (6R)-10-formyltetrahydrofolate + 5-amino-1-(5-phospho-beta-D-ribosyl)imidazole-4-carboxamide = 5-formamido-1-(5-phospho-D-ribosyl)imidazole-4-carboxamide + (6S)-5,6,7,8-tetrahydrofolate. It carries out the reaction IMP + H2O = 5-formamido-1-(5-phospho-D-ribosyl)imidazole-4-carboxamide. It functions in the pathway purine metabolism; IMP biosynthesis via de novo pathway; 5-formamido-1-(5-phospho-D-ribosyl)imidazole-4-carboxamide from 5-amino-1-(5-phospho-D-ribosyl)imidazole-4-carboxamide (10-formyl THF route): step 1/1. It participates in purine metabolism; IMP biosynthesis via de novo pathway; IMP from 5-formamido-1-(5-phospho-D-ribosyl)imidazole-4-carboxamide: step 1/1. The sequence is that of Bifunctional purine biosynthesis protein PurH from Salmonella dublin (strain CT_02021853).